Reading from the N-terminus, the 692-residue chain is Elongation factor G (692 aa).

Residues 8 to 282 (EKTRNIGIMA…AVVEYMPAPT (275 aa)) enclose the tr-type G domain. GTP contacts are provided by residues 17 to 24 (AHIDAGKT), 81 to 85 (DTPGH), and 135 to 138 (NKMD). Positions 285–304 (PNIKGVHPETGEADERHSSD) are disordered. A compositionally biased stretch (basic and acidic residues) spans 290–304 (VHPETGEADERHSSD).

Belongs to the TRAFAC class translation factor GTPase superfamily. Classic translation factor GTPase family. EF-G/EF-2 subfamily.

The protein localises to the cytoplasm. Functionally, catalyzes the GTP-dependent ribosomal translocation step during translation elongation. During this step, the ribosome changes from the pre-translocational (PRE) to the post-translocational (POST) state as the newly formed A-site-bound peptidyl-tRNA and P-site-bound deacylated tRNA move to the P and E sites, respectively. Catalyzes the coordinated movement of the two tRNA molecules, the mRNA and conformational changes in the ribosome. This Desulfitobacterium hafniense (strain DSM 10664 / DCB-2) protein is Elongation factor G.